The sequence spans 243 residues: Probable transcriptional regulatory protein BB_0025 (243 aa).

Belongs to the TACO1 family.

Its subcellular location is the cytoplasm. This Borreliella burgdorferi (strain ATCC 35210 / DSM 4680 / CIP 102532 / B31) (Borrelia burgdorferi) protein is Probable transcriptional regulatory protein BB_0025.